A 226-amino-acid chain; its full sequence is 3-dehydroquinate dehydratase (226 aa).

Residues Ser9, Glu32–Arg34, and Arg59 contribute to the 3-dehydroquinate site. His119 acts as the Proton donor/acceptor in catalysis. Lys146 (schiff-base intermediate with substrate) is an active-site residue. Positions 187, 208, and 212 each coordinate 3-dehydroquinate.

Belongs to the type-I 3-dehydroquinase family. As to quaternary structure, homodimer.

The enzyme catalyses 3-dehydroquinate = 3-dehydroshikimate + H2O. It functions in the pathway metabolic intermediate biosynthesis; chorismate biosynthesis; chorismate from D-erythrose 4-phosphate and phosphoenolpyruvate: step 3/7. Involved in the third step of the chorismate pathway, which leads to the biosynthesis of aromatic amino acids. Catalyzes the cis-dehydration of 3-dehydroquinate (DHQ) and introduces the first double bond of the aromatic ring to yield 3-dehydroshikimate. This is 3-dehydroquinate dehydratase from Desulfotalea psychrophila (strain LSv54 / DSM 12343).